Reading from the N-terminus, the 120-residue chain is UPF0344 protein LMOf2365_2298 (120 aa).

A run of 4 helical transmembrane segments spans residues 3–23 (GYIH…ALLI), 33–53 (MLQM…IMMV), 62–82 (ILAI…EMLL), and 92–112 (GMFL…GFYL).

The protein belongs to the UPF0344 family.

The protein localises to the cell membrane. The sequence is that of UPF0344 protein LMOf2365_2298 from Listeria monocytogenes serotype 4b (strain F2365).